The sequence spans 320 residues: Aspartate carbamoyltransferase catalytic subunit (320 aa).

Positions 70 and 71 each coordinate carbamoyl phosphate. K98 provides a ligand contact to L-aspartate. Residues R120, H149, and Q152 each coordinate carbamoyl phosphate. L-aspartate is bound by residues R182 and R237. 2 residues coordinate carbamoyl phosphate: G278 and P279.

The protein belongs to the aspartate/ornithine carbamoyltransferase superfamily. ATCase family. As to quaternary structure, heterododecamer (2C3:3R2) of six catalytic PyrB chains organized as two trimers (C3), and six regulatory PyrI chains organized as three dimers (R2).

The catalysed reaction is carbamoyl phosphate + L-aspartate = N-carbamoyl-L-aspartate + phosphate + H(+). The protein operates within pyrimidine metabolism; UMP biosynthesis via de novo pathway; (S)-dihydroorotate from bicarbonate: step 2/3. Functionally, catalyzes the condensation of carbamoyl phosphate and aspartate to form carbamoyl aspartate and inorganic phosphate, the committed step in the de novo pyrimidine nucleotide biosynthesis pathway. The sequence is that of Aspartate carbamoyltransferase catalytic subunit from Ruthia magnifica subsp. Calyptogena magnifica.